We begin with the raw amino-acid sequence, 151 residues long: Exosporium protein B (151 aa).

The protein localises to the spore wall. This chain is Exosporium protein B, found in Clostridium sporogenes (strain ATCC 15579).